The following is a 134-amino-acid chain: Photosystem II lipoprotein Psb27 (134 aa).

The first 24 residues, 1 to 24 (MSFLKNQLSRLLALILVVAIGLTA), serve as a signal peptide directing secretion. Cysteine 25 carries N-palmitoyl cysteine lipidation. A lipid anchor (S-diacylglycerol cysteine) is attached at cysteine 25.

It belongs to the Psb27 family. Monomer. Forms a complex with a monomeric, partially assembled PSII. This is probably the complex in which D1 is assembled and/or replaced. Present in 6-10% of PSII complexes; mostly in monomeric PSII. These PSII do not evolve oxygen, do not have an assembled calcium-manganese-oxide cluster. Psb27-containing PSII seem to be assembly intermediates; a wild-type strain includes the intrinsic membrane proteins, Psb27, Pbs28, substoichiometric amounts of PsbO and PsbQ but no PsbU or PsbV, while a ctpA deletion mutant includes the intrinsic membrane proteins (D1 as precursor), Psb27, a very low amount of PsbO and PsbQ, but no PsbU or PsbV. Small amounts of Psb27 interact with the lumenal domain of CP43 (psbC) in wild-type and a ctpA mutant. A small amount can also be detected in monomeric and trimeric photosystem I (PSI), possibly via association with PsaB.

The protein localises to the cellular thylakoid membrane. Plays a role in the repair and/or biogenesis of the calcium-manganese-oxide cluster on the lumenal face of the thylakoid membrane. Photosystem II (PSII) complexes containing this protein are monomeric, are assembly intermediates lacking the calcium-manganese-oxide cluster and miss some of the lumenal subunits. Probably blocks binding of some of the small lumenal subunits. This is Photosystem II lipoprotein Psb27 from Synechocystis sp. (strain ATCC 27184 / PCC 6803 / Kazusa).